The primary structure comprises 322 residues: Ferrochelatase (322 aa).

Fe cation is bound by residues histidine 194 and glutamate 275.

It belongs to the ferrochelatase family.

It localises to the cytoplasm. It catalyses the reaction heme b + 2 H(+) = protoporphyrin IX + Fe(2+). Its pathway is porphyrin-containing compound metabolism; protoheme biosynthesis; protoheme from protoporphyrin-IX: step 1/1. In terms of biological role, catalyzes the ferrous insertion into protoporphyrin IX. This is Ferrochelatase from Yersinia enterocolitica.